The sequence spans 221 residues: Probable lipoprotein CT_734 (221 aa).

The N-terminal stretch at 1 to 24 is a signal peptide; the sequence is MKKFIYKYSFGALLLLSGLSGLSS. C25 is lipidated: N-palmitoyl cysteine. Residue C25 is the site of S-diacylglycerol cysteine attachment.

The protein belongs to the chlamydial CPn_0875/CT_734/TC_0107 family.

It is found in the cell membrane. The polypeptide is Probable lipoprotein CT_734 (Chlamydia trachomatis serovar D (strain ATCC VR-885 / DSM 19411 / UW-3/Cx)).